A 181-amino-acid polypeptide reads, in one-letter code: Probable inactive acireductone dioxygenase 2 (181 aa).

This sequence belongs to the acireductone dioxygenase (ARD) family.

It localises to the cytoplasm. Its subcellular location is the nucleus. Functionally, probable inactive acireductone dioxygenase. The polypeptide is Probable inactive acireductone dioxygenase 2 (Sorghum bicolor (Sorghum)).